The primary structure comprises 352 residues: Protein-glutamate methylesterase/protein-glutamine glutaminase 2 (352 aa).

The 116-residue stretch at 1 to 116 (MVVDDSAVVR…KQFLTDSADE (116 aa)) folds into the Response regulatory domain. Residue D50 is modified to 4-aspartylphosphate. Residues 162–352 (AQTTERIVAI…MAREIVTQLQ (191 aa)) form the CheB-type methylesterase domain. Active-site residues include S174, H200, and D296.

This sequence belongs to the CheB family. In terms of processing, phosphorylated by CheA. Phosphorylation of the N-terminal regulatory domain activates the methylesterase activity.

Its subcellular location is the cytoplasm. It catalyses the reaction [protein]-L-glutamate 5-O-methyl ester + H2O = L-glutamyl-[protein] + methanol + H(+). It carries out the reaction L-glutaminyl-[protein] + H2O = L-glutamyl-[protein] + NH4(+). Its function is as follows. Involved in chemotaxis. Part of a chemotaxis signal transduction system that modulates chemotaxis in response to various stimuli. Catalyzes the demethylation of specific methylglutamate residues introduced into the chemoreceptors (methyl-accepting chemotaxis proteins or MCP) by CheR. Also mediates the irreversible deamidation of specific glutamine residues to glutamic acid. The sequence is that of Protein-glutamate methylesterase/protein-glutamine glutaminase 2 from Xanthomonas campestris pv. campestris (strain ATCC 33913 / DSM 3586 / NCPPB 528 / LMG 568 / P 25).